Consider the following 207-residue polypeptide: MKSKKKGKNLWRDHYTDKAQKAGFPARSVFKLEEMQKRWKILRPGQKVLDLGCAPGSWLKYASQIVGDSGRVIGLDLKPMDQPDKPNAQFIQGDAFELTQEFLDEIGRDFDVVLSDMAPNTTGIKNVDALKSAALCESALAAAVTVLKPGGSFVCKIFQGEGFDAFIKDVKKYFTKHKIFKPESTRKQSREIYVVGWSKKGGSHVRT.

5 residues coordinate S-adenosyl-L-methionine: Gly56, Trp58, Asp76, Asp94, and Asp116. The active-site Proton acceptor is Lys156.

This sequence belongs to the class I-like SAM-binding methyltransferase superfamily. RNA methyltransferase RlmE family.

It localises to the cytoplasm. It catalyses the reaction uridine(2552) in 23S rRNA + S-adenosyl-L-methionine = 2'-O-methyluridine(2552) in 23S rRNA + S-adenosyl-L-homocysteine + H(+). Its function is as follows. Specifically methylates the uridine in position 2552 of 23S rRNA at the 2'-O position of the ribose in the fully assembled 50S ribosomal subunit. This is Ribosomal RNA large subunit methyltransferase E from Desulfatibacillum aliphaticivorans.